The primary structure comprises 197 residues: Segregation and condensation protein B (197 aa).

The protein belongs to the ScpB family. Homodimer. Homodimerization may be required to stabilize the binding of ScpA to the Smc head domains. Component of a cohesin-like complex composed of ScpA, ScpB and the Smc homodimer, in which ScpA and ScpB bind to the head domain of Smc. The presence of the three proteins is required for the association of the complex with DNA.

Its subcellular location is the cytoplasm. Participates in chromosomal partition during cell division. May act via the formation of a condensin-like complex containing Smc and ScpA that pull DNA away from mid-cell into both cell halves. The protein is Segregation and condensation protein B of Bacillus pumilus (strain SAFR-032).